We begin with the raw amino-acid sequence, 1728 residues long: Mitochondrial 3' processome subunit 1 (1728 aa).

The N-terminal 117 residues, 1–117, are a transit peptide targeting the mitochondrion; it reads MRRLILSQTL…AGKMTGSSRF (117 aa). Disordered stretches follow at residues 45-71, 88-156, and 829-863; these read HRKR…SGDG, ESPV…IGQQ, and GCNR…PKGT.

In terms of assembly, component of the mitochondrial 3' processome (MPsome) complex composed at least of terminal uridylyltransferase KRET1/TUT1, 3'-5' exonuclease DSS1, MPSS1, MPSS2 and MPSS3. Within the complex, interacts with KRET1.

Its subcellular location is the mitochondrion. Functionally, as part of the mitochondrial 3' processome (MPsome), involved in the maturation of guided RNA (gRNA) precursors. This chain is Mitochondrial 3' processome subunit 1, found in Trypanosoma brucei brucei.